We begin with the raw amino-acid sequence, 926 residues long: Chitin synthase-like protein 2 (926 aa).

Residues 1-56 (MSFQNPSYINAKHRSFLQPKDTQDSQDLRNWVSHSSVDEETAYSSSTLSSSSSKSF) are disordered. Positions 44–55 (SSSTLSSSSSKS) are enriched in low complexity. The next 7 membrane-spanning stretches (helical) occupy residues 564–584 (INSS…LWTT), 599–619 (LVFA…FLAF), 641–661 (LFLV…MLAM), 671–691 (LLFI…FCVF), 721–741 (LLIL…FFIF), 853–873 (VLVW…VFDG), and 885–905 (IFWS…TFIA).

This sequence belongs to the chitin synthase family.

The protein resides in the membrane. Plays a role in septum formation. Has no chitin synthase activity. This is Chitin synthase-like protein 2 (chs2) from Schizosaccharomyces pombe (strain 972 / ATCC 24843) (Fission yeast).